We begin with the raw amino-acid sequence, 155 residues long: uncharacterized protein (155 aa).

The chain crosses the membrane as a helical span at residues 5–25 (GIIICVGIAFLIFIFLWAYFK).

The protein resides in the membrane. This is an uncharacterized protein from Acheta domesticus (House cricket).